Reading from the N-terminus, the 167-residue chain is 6,7-dimethyl-8-ribityllumazine synthase (167 aa).

Residues Phe-24, 58 to 60 (ALE), and 82 to 84 (AVV) contribute to the 5-amino-6-(D-ribitylamino)uracil site. Residue 87-88 (ET) participates in (2S)-2-hydroxy-3-oxobutyl phosphate binding. The active-site Proton donor is the His-90. Asn-115 is a 5-amino-6-(D-ribitylamino)uracil binding site. (2S)-2-hydroxy-3-oxobutyl phosphate is bound at residue Arg-129.

The protein belongs to the DMRL synthase family.

The catalysed reaction is (2S)-2-hydroxy-3-oxobutyl phosphate + 5-amino-6-(D-ribitylamino)uracil = 6,7-dimethyl-8-(1-D-ribityl)lumazine + phosphate + 2 H2O + H(+). It participates in cofactor biosynthesis; riboflavin biosynthesis; riboflavin from 2-hydroxy-3-oxobutyl phosphate and 5-amino-6-(D-ribitylamino)uracil: step 1/2. Catalyzes the formation of 6,7-dimethyl-8-ribityllumazine by condensation of 5-amino-6-(D-ribitylamino)uracil with 3,4-dihydroxy-2-butanone 4-phosphate. This is the penultimate step in the biosynthesis of riboflavin. This chain is 6,7-dimethyl-8-ribityllumazine synthase, found in Cupriavidus pinatubonensis (strain JMP 134 / LMG 1197) (Cupriavidus necator (strain JMP 134)).